We begin with the raw amino-acid sequence, 295 residues long: Thioredoxin-related transmembrane protein 2 (295 aa).

The N-terminal stretch at 1–48 is a signal peptide; that stretch reads MAVLAPLIALVYSVPRLSRWLARPYCLLSALLSIAFLLVRKLPPICNG. Over 49 to 102 the chain is Extracellular; it reads LPTQREDGNPCDFDWREVEILMFLSAIVMMKNRRSITVEQHVGNIFMFSKVANA. The helical transmembrane segment at 103–125 threads the bilayer; the sequence is ILFFRLDIRMGLLYLTLCIVFLM. Positions 114 to 269 constitute a Thioredoxin domain; sequence LLYLTLCIVF…LYQRAKKLSK (156 aa). The Cytoplasmic segment spans residues 126–295; it reads TCKPPLYMGP…VPDGENKKDK (170 aa). 2 positions are modified to phosphoserine: S211 and S243. Residues 266 to 295 are disordered; sequence KLSKGGDMSEEKPGNPTPTAVPDGENKKDK. Residues 292–295 carry the Di-lysine motif motif; it reads KKDK.

As to quaternary structure, monomer. Homodimer; disulfide-linked. Occurs in both reduced and oxidized monomeric form. Oxidative conditions increase homodimerization. Interacts with CANX. Interacts with ATP2A2.

It is found in the endoplasmic reticulum membrane. The protein resides in the mitochondrion membrane. Endoplasmic reticulum and mitochondria-associated protein that probably functions as a regulator of cellular redox state and thereby regulates protein post-translational modification, protein folding and mitochondrial activity. Indirectly regulates neuronal proliferation, migration, and organization in the developing brain. This is Thioredoxin-related transmembrane protein 2 (Tmx2) from Rattus norvegicus (Rat).